Here is a 228-residue protein sequence, read N- to C-terminus: MPTLVLIRHGQSAWNLENRFTGWWDVNLTDQGIAEAKAAGELMAAKGLDFDQCYTSFQTRAIKTLNIALEAMGRLWLPVEKDWRLNERHYGGLTGLNKAETAARHGDAQVKVWRRSFDIPPPVLEPGGEFDLSKDRRYAGIAIPSTESLKDTIARVLPYWEERIAPDLKAGKRVVISAHGNSLRALVKHLSHIPDDEITELEIPTGQPIVYELADDLTARDRYYLSER.

Substrate-binding positions include R8–N15, T21–G22, R60, E87–Y90, K98, R114–R115, and G180–N181. The Tele-phosphohistidine intermediate role is filled by H9. The Proton donor/acceptor role is filled by E87.

Belongs to the phosphoglycerate mutase family. BPG-dependent PGAM subfamily. As to quaternary structure, homodimer.

The catalysed reaction is (2R)-2-phosphoglycerate = (2R)-3-phosphoglycerate. Its pathway is carbohydrate degradation; glycolysis; pyruvate from D-glyceraldehyde 3-phosphate: step 3/5. Catalyzes the interconversion of 2-phosphoglycerate and 3-phosphoglycerate. This is 2,3-bisphosphoglycerate-dependent phosphoglycerate mutase from Rhizorhabdus wittichii (strain DSM 6014 / CCUG 31198 / JCM 15750 / NBRC 105917 / EY 4224 / RW1) (Sphingomonas wittichii).